The following is a 342-amino-acid chain: Tetraacyldisaccharide 4'-kinase (342 aa).

ATP is bound at residue 68–75; sequence TVGGTGKT.

It belongs to the LpxK family.

The enzyme catalyses a lipid A disaccharide + ATP = a lipid IVA + ADP + H(+). It functions in the pathway glycolipid biosynthesis; lipid IV(A) biosynthesis; lipid IV(A) from (3R)-3-hydroxytetradecanoyl-[acyl-carrier-protein] and UDP-N-acetyl-alpha-D-glucosamine: step 6/6. In terms of biological role, transfers the gamma-phosphate of ATP to the 4'-position of a tetraacyldisaccharide 1-phosphate intermediate (termed DS-1-P) to form tetraacyldisaccharide 1,4'-bis-phosphate (lipid IVA). This is Tetraacyldisaccharide 4'-kinase from Burkholderia ambifaria (strain MC40-6).